Here is a 146-residue protein sequence, read N- to C-terminus: MIGLVQRVAHACAKVNGEVIGSIDEGLLVLLAVEPDDTERKAERLLDRISGYRIFADPNGKMNLSLKDVGGELLVVSQFTLAADTKKGMRPSFSSAASPELGERLYDHFVEKASALLSRVQTGRFGAEMEITLTNIGPTTFSLRVE.

A Gly-cisPro motif, important for rejection of L-amino acids motif is present at residues 137–138; sequence GP.

Belongs to the DTD family. As to quaternary structure, homodimer.

The protein resides in the cytoplasm. The enzyme catalyses glycyl-tRNA(Ala) + H2O = tRNA(Ala) + glycine + H(+). It catalyses the reaction a D-aminoacyl-tRNA + H2O = a tRNA + a D-alpha-amino acid + H(+). In terms of biological role, an aminoacyl-tRNA editing enzyme that deacylates mischarged D-aminoacyl-tRNAs. Also deacylates mischarged glycyl-tRNA(Ala), protecting cells against glycine mischarging by AlaRS. Acts via tRNA-based rather than protein-based catalysis; rejects L-amino acids rather than detecting D-amino acids in the active site. By recycling D-aminoacyl-tRNA to D-amino acids and free tRNA molecules, this enzyme counteracts the toxicity associated with the formation of D-aminoacyl-tRNA entities in vivo and helps enforce protein L-homochirality. The protein is D-aminoacyl-tRNA deacylase of Hahella chejuensis (strain KCTC 2396).